A 399-amino-acid chain; its full sequence is Salivary protein Tsal1 (399 aa).

The signal sequence occupies residues 1–22; it reads MALKLVYGVFTLALLGISSVNA. Residue asparagine 268 is glycosylated (N-linked (GlcNAc...) asparagine).

It belongs to the DNA/RNA non-specific endonuclease family. The cofactor is a divalent metal cation. In terms of tissue distribution, saliva (at protein level).

It localises to the secreted. Functionally, binds double-stranded DNA (dsDNA) with high affinity. Binds double-stranded RNA. Binds single-stranded DNA with lower affinity and with a preference for purine-rich sequences. Shows residual nuclease activity for dsDNA. May facilitate blood meal intake by lowering the local viscosity created by the release of host DNA. This Glossina morsitans morsitans (Savannah tsetse fly) protein is Salivary protein Tsal1.